Consider the following 597-residue polypeptide: Gamma-terpinene synthase, chloroplastic (597 aa).

A chloroplast-targeting transit peptide spans 1 to 47 (MATLSMQVSILSKQVKNLNSFGMRASKLPMVARRVDVSTTRLRPICS). Mn(2+)-binding residues include aspartate 350 and aspartate 354. The short motif at 350-354 (DDVYD) is the DDXXD motif element. Homodimerization regions lie at residues 356–362 (YGTLDEL) and 428–465 (EAKW…FTLP). Aspartate 494 and glutamate 502 together coordinate Mn(2+).

The protein belongs to the terpene synthase family. Homodimer. It depends on Mn(2+) as a cofactor. Mg(2+) serves as cofactor.

Its subcellular location is the plastid. It is found in the chloroplast. It catalyses the reaction (2E)-geranyl diphosphate = gamma-terpinene + diphosphate. The protein operates within secondary metabolite biosynthesis; terpenoid biosynthesis. In terms of biological role, involved in the biosynthesis of phenolic monoterpenes natural products thymol and carvacrol which have a broad range of biological activities acting as antimicrobial compounds, insecticides, antioxidants and pharmaceutical agents. Monoterpene synthase which catalyzes the conversion of geranyl diphosphate (GPP) to gamma-terpinene and minor amounts of other monoterpenes (e.g. alpha-thujene, alpha-terpinene, myrcene, sabinene, (+)-R-limonene, alpha-pinene and alpha-phellandrene). The sequence is that of Gamma-terpinene synthase, chloroplastic from Thymus caespititius (Cretan thyme).